A 374-amino-acid polypeptide reads, in one-letter code: Eukaryotic translation initiation factor 3 subunit M (374 aa).

In terms of domain architecture, PCI spans 180 to 339 (EAAKVMVELL…KKVVVSHSTH (160 aa)).

This sequence belongs to the eIF-3 subunit M family. Component of the eukaryotic translation initiation factor 3 (eIF-3) complex, which is composed of 13 subunits: eif3a, eif3b, eif3c, eif3d, eif3e, eif3f, eif3g, eif3h, eif3i, eif3j, eif3k, eif3l and eif3m.

The protein resides in the cytoplasm. Functionally, component of the eukaryotic translation initiation factor 3 (eIF-3) complex, which is involved in protein synthesis of a specialized repertoire of mRNAs and, together with other initiation factors, stimulates binding of mRNA and methionyl-tRNAi to the 40S ribosome. The eIF-3 complex specifically targets and initiates translation of a subset of mRNAs involved in cell proliferation. The polypeptide is Eukaryotic translation initiation factor 3 subunit M (eif3m) (Xenopus laevis (African clawed frog)).